A 221-amino-acid chain; its full sequence is 3-isopropylmalate dehydratase small subunit (221 aa).

This sequence belongs to the LeuD family. LeuD type 1 subfamily. As to quaternary structure, heterodimer of LeuC and LeuD.

The enzyme catalyses (2R,3S)-3-isopropylmalate = (2S)-2-isopropylmalate. It functions in the pathway amino-acid biosynthesis; L-leucine biosynthesis; L-leucine from 3-methyl-2-oxobutanoate: step 2/4. Functionally, catalyzes the isomerization between 2-isopropylmalate and 3-isopropylmalate, via the formation of 2-isopropylmaleate. This is 3-isopropylmalate dehydratase small subunit from Nitrosomonas europaea (strain ATCC 19718 / CIP 103999 / KCTC 2705 / NBRC 14298).